A 440-amino-acid polypeptide reads, in one-letter code: Transposon Ty1-BL Gag polyprotein (440 aa).

Composition is skewed to polar residues over residues 20–31, 46–55, and 137–168; these read SVTSKEVQTTQD, VSTQANSQQP, and VGTH…TNQH. 3 disordered regions span residues 20–84, 137–173, and 350–424; these read SVTS…QNGP, VGTH…RPPP, and QQES…TTEP. Residues 299-401 form an RNA-binding region; sequence NNGIPINNKV…NSQSRTARAH (103 aa). The span at 363 to 372 shows a compositional bias: basic and acidic residues; the sequence is SPSDEKKDSR. The span at 373-411 shows a compositional bias: polar residues; the sequence is TYTNTTKPKSITRNSQKPNNSQSRTARAHNVSTFNNSPG.

Homotrimer.

The protein resides in the cytoplasm. Capsid protein (CA) is the structural component of the virus-like particle (VLP), forming the shell that encapsulates the retrotransposons dimeric RNA genome. The particles are assembled from trimer-clustered units and there are holes in the capsid shells that allow for the diffusion of macromolecules. CA also has nucleocapsid-like chaperone activity, promoting primer tRNA(i)-Met annealing to the multipartite primer-binding site (PBS), dimerization of Ty1 RNA and initiation of reverse transcription. The protein is Transposon Ty1-BL Gag polyprotein (TY1A-BL) of Saccharomyces cerevisiae (strain ATCC 204508 / S288c) (Baker's yeast).